Consider the following 230-residue polypeptide: Ureidoacrylate amidohydrolase RutB (230 aa).

Residue aspartate 24 is the Proton acceptor of the active site. Lysine 133 is a catalytic residue. The Nucleophile role is filled by cysteine 166.

The protein belongs to the isochorismatase family. RutB subfamily.

The enzyme catalyses (Z)-3-ureidoacrylate + H2O + H(+) = (Z)-3-aminoacrylate + NH4(+) + CO2. The catalysed reaction is (Z)-3-ureidoacrylate + H2O = (Z)-3-aminoacrylate + carbamate + H(+). It carries out the reaction (Z)-2-methylureidoacrylate + H2O + H(+) = (Z)-2-methylaminoacrylate + NH4(+) + CO2. Hydrolyzes ureidoacrylate to form aminoacrylate and carbamate. The carbamate hydrolyzes spontaneously, thereby releasing one of the nitrogen atoms of the pyrimidine ring as ammonia and one of its carbon atoms as CO2. The sequence is that of Ureidoacrylate amidohydrolase RutB from Escherichia coli O44:H18 (strain 042 / EAEC).